A 157-amino-acid chain; its full sequence is Ribosomal RNA large subunit methyltransferase H (157 aa).

S-adenosyl-L-methionine is bound by residues Leu-73, Gly-105, and 124–129 (LSKMTF).

Belongs to the RNA methyltransferase RlmH family. Homodimer.

The protein resides in the cytoplasm. The enzyme catalyses pseudouridine(1915) in 23S rRNA + S-adenosyl-L-methionine = N(3)-methylpseudouridine(1915) in 23S rRNA + S-adenosyl-L-homocysteine + H(+). In terms of biological role, specifically methylates the pseudouridine at position 1915 (m3Psi1915) in 23S rRNA. The polypeptide is Ribosomal RNA large subunit methyltransferase H (Christiangramia forsetii (strain DSM 17595 / CGMCC 1.15422 / KT0803) (Gramella forsetii)).